A 554-amino-acid chain; its full sequence is CTP synthase (554 aa).

Residues 1–265 (MTPLIFVTGG…DELVIDQFKL (265 aa)) form an amidoligase domain region. Ser13 contacts CTP. Ser13 contacts UTP. ATP contacts are provided by residues 14–19 (SLGKGI) and Asp71. 2 residues coordinate Mg(2+): Asp71 and Glu139. Residues 146 to 148 (DIE), 186 to 191 (KTKPTQ), and Lys222 contribute to the CTP site. UTP is bound by residues 186–191 (KTKPTQ) and Lys222. Residues 292-545 (TIAVVGKYVD…VRAAREKKAG (254 aa)) enclose the Glutamine amidotransferase type-1 domain. Gly353 is a binding site for L-glutamine. Catalysis depends on Cys380, which acts as the Nucleophile; for glutamine hydrolysis. L-glutamine is bound by residues 381-384 (YGMQ), Glu404, and Arg471. Catalysis depends on residues His518 and Glu520.

It belongs to the CTP synthase family. In terms of assembly, homotetramer.

It carries out the reaction UTP + L-glutamine + ATP + H2O = CTP + L-glutamate + ADP + phosphate + 2 H(+). The catalysed reaction is L-glutamine + H2O = L-glutamate + NH4(+). It catalyses the reaction UTP + NH4(+) + ATP = CTP + ADP + phosphate + 2 H(+). It participates in pyrimidine metabolism; CTP biosynthesis via de novo pathway; CTP from UDP: step 2/2. Its activity is regulated as follows. Allosterically activated by GTP, when glutamine is the substrate; GTP has no effect on the reaction when ammonia is the substrate. The allosteric effector GTP functions by stabilizing the protein conformation that binds the tetrahedral intermediate(s) formed during glutamine hydrolysis. Inhibited by the product CTP, via allosteric rather than competitive inhibition. Its function is as follows. Catalyzes the ATP-dependent amination of UTP to CTP with either L-glutamine or ammonia as the source of nitrogen. Regulates intracellular CTP levels through interactions with the four ribonucleotide triphosphates. In Xanthomonas campestris pv. campestris (strain B100), this protein is CTP synthase.